A 240-amino-acid polypeptide reads, in one-letter code: NAD(P)H-hydrate epimerase (240 aa).

In terms of domain architecture, YjeF N-terminal spans 15–224; that stretch reads AQEIDAELMG…SYNLKLPCYP (210 aa). A (6S)-NADPHX-binding site is contributed by 66–70; sequence NQGGD. Residues Gln67 and Asp129 each contribute to the K(+) site. (6S)-NADPHX is bound by residues 133–139 and Asp162; that span reads GFSFHSE. Ser165 provides a ligand contact to K(+).

This sequence belongs to the NnrE/AIBP family. Requires K(+) as cofactor.

It localises to the cytoplasm. The protein localises to the mitochondrion. It catalyses the reaction (6R)-NADHX = (6S)-NADHX. The catalysed reaction is (6R)-NADPHX = (6S)-NADPHX. Functionally, catalyzes the epimerization of the S- and R-forms of NAD(P)HX, a damaged form of NAD(P)H that is a result of enzymatic or heat-dependent hydration. This is a prerequisite for the S-specific NAD(P)H-hydrate dehydratase to allow the repair of both epimers of NAD(P)HX. The sequence is that of NAD(P)H-hydrate epimerase from Puccinia graminis f. sp. tritici (strain CRL 75-36-700-3 / race SCCL) (Black stem rust fungus).